The sequence spans 151 residues: Putative pre-16S rRNA nuclease (151 aa).

Belongs to the YqgF nuclease family.

Its subcellular location is the cytoplasm. Could be a nuclease involved in processing of the 5'-end of pre-16S rRNA. The sequence is that of Putative pre-16S rRNA nuclease from Neisseria meningitidis serogroup B (strain ATCC BAA-335 / MC58).